A 339-amino-acid chain; its full sequence is Anthranilate phosphoribosyltransferase (339 aa).

5-phospho-alpha-D-ribose 1-diphosphate contacts are provided by residues Gly86, 89–90 (GD), Thr94, 96–99 (NIST), 114–122 (KHGNRGVSS), and Ser126. Anthranilate is bound at residue Gly86. Residue Ser98 participates in Mg(2+) binding. Asn117 lines the anthranilate pocket. Residue Arg172 coordinates anthranilate. Residues Asp230 and Glu231 each contribute to the Mg(2+) site.

This sequence belongs to the anthranilate phosphoribosyltransferase family. In terms of assembly, homodimer. It depends on Mg(2+) as a cofactor.

The enzyme catalyses N-(5-phospho-beta-D-ribosyl)anthranilate + diphosphate = 5-phospho-alpha-D-ribose 1-diphosphate + anthranilate. It participates in amino-acid biosynthesis; L-tryptophan biosynthesis; L-tryptophan from chorismate: step 2/5. In terms of biological role, catalyzes the transfer of the phosphoribosyl group of 5-phosphorylribose-1-pyrophosphate (PRPP) to anthranilate to yield N-(5'-phosphoribosyl)-anthranilate (PRA). This is Anthranilate phosphoribosyltransferase from Photobacterium profundum (strain SS9).